Consider the following 695-residue polypeptide: Elongation factor G (695 aa).

Positions Glu-8 to Thr-282 constitute a tr-type G domain. GTP contacts are provided by residues Ala-17–Thr-24, Asp-81–His-85, and Asn-135–Asp-138.

This sequence belongs to the TRAFAC class translation factor GTPase superfamily. Classic translation factor GTPase family. EF-G/EF-2 subfamily.

The protein resides in the cytoplasm. Functionally, catalyzes the GTP-dependent ribosomal translocation step during translation elongation. During this step, the ribosome changes from the pre-translocational (PRE) to the post-translocational (POST) state as the newly formed A-site-bound peptidyl-tRNA and P-site-bound deacylated tRNA move to the P and E sites, respectively. Catalyzes the coordinated movement of the two tRNA molecules, the mRNA and conformational changes in the ribosome. The polypeptide is Elongation factor G (Listeria monocytogenes serotype 4b (strain CLIP80459)).